The primary structure comprises 129 residues: Dormancy-associated protein 2 (129 aa).

The signal sequence occupies residues 1-25 (MDSRKAMLILGLLAMVLLISSEVSA). The segment at 110–129 (GGYHGGGGHGGHGGASNNGN) is disordered.

The protein belongs to the DRM1/ARP family. In terms of tissue distribution, expressed in axilary buds. Detected in growing stems, leaflets and floral organs, but not in roots.

The sequence is that of Dormancy-associated protein 2 from Pisum sativum (Garden pea).